The primary structure comprises 367 residues: Glutamate 5-kinase (367 aa).

An ATP-binding site is contributed by Lys9. Residues Ser49, Asp136, and Asn148 each contribute to the substrate site. ATP contacts are provided by residues 168 to 169 (TD) and 210 to 216 (TGGMKSK). The region spanning 276–350 (SGQIEVDAGA…GMQSQDIQAR (75 aa)) is the PUA domain.

The protein belongs to the glutamate 5-kinase family.

It is found in the cytoplasm. The catalysed reaction is L-glutamate + ATP = L-glutamyl 5-phosphate + ADP. It functions in the pathway amino-acid biosynthesis; L-proline biosynthesis; L-glutamate 5-semialdehyde from L-glutamate: step 1/2. Its function is as follows. Catalyzes the transfer of a phosphate group to glutamate to form L-glutamate 5-phosphate. The chain is Glutamate 5-kinase from Bacillus mycoides (strain KBAB4) (Bacillus weihenstephanensis).